A 272-amino-acid polypeptide reads, in one-letter code: Aquaporin-1 (272 aa).

At 1–11 (MASEFKKKLFW) the chain is on the cytoplasmic side. Residues 12-29 (RAVVAEFLAMILFIFISI) form a helical membrane-spanning segment. The Extracellular portion of the chain corresponds to 30 to 48 (GSALGFHYPIKSNQTTGAV). N-linked (GlcNAc...) asparagine glycosylation occurs at Asn-42. Residues 49 to 67 (QDNVKVSLAFGLSIATLAQ) form a helical membrane-spanning segment. The Cytoplasmic segment spans residues 68-70 (SVG). The stretch at 71 to 84 (HISGAHLNPAVTLG) is an intramembrane region. The short motif at 78-80 (NPA) is the NPA 1 element. The Cytoplasmic segment spans residues 85 to 92 (LLLSCQIS). Residues 93-111 (ILRAIMYIIAQCVGAIVAT) form a helical membrane-spanning segment. At 112–135 (VILSGITSSLPDNSLGLNALAPGV) the chain is on the extracellular side. Residues 136–155 (NSGQGLGIEIIGTLQLVLCV) traverse the membrane as a helical segment. Topologically, residues 156–166 (LATTDRRRRRD) are cytoplasmic. A helical membrane pass occupies residues 167–184 (LGDSGPLAIGFSVALGHL). At 185–189 (LAIDY) the chain is on the extracellular side. The stretch at 190–202 (TGCGINPARSFGS) is an intramembrane region. An NPA 2 motif is present at residues 195–197 (NPA). Residues 203-209 (SVITHNF) lie on the Extracellular side of the membrane. The chain crosses the membrane as a helical span at residues 210–227 (QDHWIFWVGPFIGAALAV). Over 228-272 (LIYDFILAPRSSDLTDRVKVWTSGQVEEYDLDADDINSRVEMKPK) the chain is Cytoplasmic. Ser-250 bears the Phosphoserine mark. Tyr-256 is subject to Phosphotyrosine. Ser-265 is subject to Phosphoserine.

It belongs to the MIP/aquaporin (TC 1.A.8) family. Homotetramer; each monomer provides an independent water pore. Component of the ankyrin-1 complex in the erythrocyte, composed of ANK1, RHCE, RHAG, SLC4A1, EPB42, GYPA, GYPB and AQP1. Interacts with EPHB2; involved in endolymph production in the inner ear. Identified in a complex with STOM. Interacts (via the N-terminal) with ANK1 (via ANK 1-5 repeats). Interacts (via the C-terminal) with EPB42. As to expression, detected in fetal kidney (at protein level). Detected in fetal kidney.

It localises to the cell membrane. It catalyses the reaction H2O(in) = H2O(out). The catalysed reaction is nitric oxide(out) = nitric oxide(in). It carries out the reaction CO2(out) = CO2(in). The enzyme catalyses glycerol(in) = glycerol(out). It catalyses the reaction H2O2(out) = H2O2(in). The catalysed reaction is K(+)(in) = K(+)(out). It carries out the reaction Na(+)(in) = Na(+)(out). Functionally, forms a water channel that facilitates the transport of water across cell membranes, playing a crucial role in water homeostasis in various tissues. Could also be permeable to small solutes including hydrogen peroxide, glycerol and gases such as amonnia (NH3), nitric oxide (NO) and carbon dioxide (CO2). Recruited to the ankyrin-1 complex, a multiprotein complex of the erythrocyte membrane, it could be part of a CO2 metabolon, linking facilitated diffusion of CO2 across the membrane, anion exchange of Cl(-)/HCO3(-) and interconversion of dissolved CO2 and carbonic acid in the cytosol. In vitro, it shows non-selective gated cation channel activity and may be permeable to cations like K(+) and Na(+) in vivo. The polypeptide is Aquaporin-1 (Ovis aries (Sheep)).